The sequence spans 203 residues: Glycerol-3-phosphate acyltransferase (203 aa).

4 consecutive transmembrane segments (helical) span residues 6-26 (LTLLMIVAAYLAGSVSSAVLV), 82-102 (AISLGLIAIAACLGHIYPIFF), 118-138 (APIGDDLAICLMASWVVLVLI), and 141-161 (YSSLAAIITALLAPLYTWWLD).

Belongs to the PlsY family. As to quaternary structure, probably interacts with PlsX.

It localises to the cell inner membrane. The catalysed reaction is an acyl phosphate + sn-glycerol 3-phosphate = a 1-acyl-sn-glycero-3-phosphate + phosphate. It participates in lipid metabolism; phospholipid metabolism. Its function is as follows. Catalyzes the transfer of an acyl group from acyl-phosphate (acyl-PO(4)) to glycerol-3-phosphate (G3P) to form lysophosphatidic acid (LPA). This enzyme utilizes acyl-phosphate as fatty acyl donor, but not acyl-CoA or acyl-ACP. The sequence is that of Glycerol-3-phosphate acyltransferase from Shewanella sp. (strain MR-4).